Consider the following 262-residue polypeptide: Alpha-tubulin N-acetyltransferase 1 (262 aa).

One can recognise an N-acetyltransferase domain in the interval 1–177 (MQVDADLRPI…TNFVVFEELF (177 aa)). 111-124 (FYVHFSCQRQGVGQ) is a binding site for acetyl-CoA.

Belongs to the acetyltransferase ATAT1 family. As to expression, expressed solely in touch receptor neurons.

The catalysed reaction is L-lysyl-[alpha-tubulin] + acetyl-CoA = N(6)-acetyl-L-lysyl-[alpha-tubulin] + CoA + H(+). In terms of biological role, specifically acetylates 'Lys-40' in alpha-tubulin/mec-12 on the lumenal side of microtubules. Promotes microtubule destabilization and accelerates microtubule dynamics; this activity may be independent of acetylation activity. Acetylates alpha-tubulin with a slow enzymatic rate, due to a catalytic site that is not optimized for acetyl transfer. Enters the microtubule through each end and diffuses quickly throughout the lumen of microtubules. Acetylates only long/old microtubules because of its slow acetylation rate since it does not have time to act on dynamically unstable microtubules before the enzyme is released. Required for the maintenance of touch receptor neurons and possibly other type of neurons involved in locomotion. Regulates the number and localization of mitochondria in mechanosensory neurons. Plays a role in axonal transport. This Caenorhabditis elegans protein is Alpha-tubulin N-acetyltransferase 1.